Here is a 223-residue protein sequence, read N- to C-terminus: N-acetylmuramic acid 6-phosphate phosphatase (223 aa).

The active-site Nucleophile is the Asp9. 3 residues coordinate Mg(2+): Asp9, Asp11, and Asp168. Asp11 functions as the Proton donor in the catalytic mechanism.

It belongs to the HAD-like hydrolase superfamily. CbbY/CbbZ/Gph/YieH family. Phosphatase MupP subfamily. Requires Mg(2+) as cofactor.

It catalyses the reaction N-acetyl-D-muramate 6-phosphate + H2O = N-acetyl-D-muramate + phosphate. Its pathway is cell wall biogenesis; peptidoglycan recycling. In terms of biological role, specifically catalyzes the dephosphorylation of N-acetylmuramate 6-phosphate (MurNAc-6P) to MurNac. Is involved in peptidoglycan recycling as part of a cell wall recycling pathway that bypasses de novo biosynthesis of the peptidoglycan precursor UDP-MurNAc. Plays a role in intrinsic resistance to fosfomycin, which targets the de novo synthesis of UDP-MurNAc. Shows a very low activity on GlcNAc-6P, and neither alpha-1-phosphorylated MurNAc, GlcNAc, or glucose nor glucosamine-6P or glucose-6P can be used as a substrate. This chain is N-acetylmuramic acid 6-phosphate phosphatase, found in Pseudomonas putida (strain ATCC 47054 / DSM 6125 / CFBP 8728 / NCIMB 11950 / KT2440).